We begin with the raw amino-acid sequence, 339 residues long: UDP-3-O-acylglucosamine N-acyltransferase (339 aa).

H248 serves as the catalytic Proton acceptor.

It belongs to the transferase hexapeptide repeat family. LpxD subfamily. As to quaternary structure, homotrimer.

The enzyme catalyses a UDP-3-O-[(3R)-3-hydroxyacyl]-alpha-D-glucosamine + a (3R)-hydroxyacyl-[ACP] = a UDP-2-N,3-O-bis[(3R)-3-hydroxyacyl]-alpha-D-glucosamine + holo-[ACP] + H(+). The protein operates within bacterial outer membrane biogenesis; LPS lipid A biosynthesis. In terms of biological role, catalyzes the N-acylation of UDP-3-O-acylglucosamine using 3-hydroxyacyl-ACP as the acyl donor. Is involved in the biosynthesis of lipid A, a phosphorylated glycolipid that anchors the lipopolysaccharide to the outer membrane of the cell. In Caulobacter vibrioides (strain NA1000 / CB15N) (Caulobacter crescentus), this protein is UDP-3-O-acylglucosamine N-acyltransferase.